The sequence spans 548 residues: Probable malate:quinone oxidoreductase (548 aa).

Belongs to the MQO family. Requires FAD as cofactor.

The enzyme catalyses (S)-malate + a quinone = a quinol + oxaloacetate. Its pathway is carbohydrate metabolism; tricarboxylic acid cycle; oxaloacetate from (S)-malate (quinone route): step 1/1. In Escherichia coli (strain SE11), this protein is Probable malate:quinone oxidoreductase.